The chain runs to 456 residues: Bifunctional protein GlmU (456 aa).

The pyrophosphorylase stretch occupies residues 1-229 (MYKCALILAA…FEEILGVNSR (229 aa)). Residues 8-11 (LAAG), K22, Q73, and 78-79 (GT) contribute to the UDP-N-acetyl-alpha-D-glucosamine site. Residue D103 coordinates Mg(2+). UDP-N-acetyl-alpha-D-glucosamine-binding residues include G140, E155, N170, and N227. N227 contacts Mg(2+). Residues 230 to 250 (LQLCQVGKVMQKRINEKHMEN) form a linker region. The tract at residues 251 to 456 (GSTLIDPDNT…GWVDKKGLLK (206 aa)) is N-acetyltransferase. UDP-N-acetyl-alpha-D-glucosamine contacts are provided by R332 and K350. H362 functions as the Proton acceptor in the catalytic mechanism. 2 residues coordinate UDP-N-acetyl-alpha-D-glucosamine: Y365 and N376. Acetyl-CoA-binding positions include 385-386 (NY), A422, and R439.

It in the N-terminal section; belongs to the N-acetylglucosamine-1-phosphate uridyltransferase family. This sequence in the C-terminal section; belongs to the transferase hexapeptide repeat family. As to quaternary structure, homotrimer. The cofactor is Mg(2+).

It localises to the cytoplasm. The enzyme catalyses alpha-D-glucosamine 1-phosphate + acetyl-CoA = N-acetyl-alpha-D-glucosamine 1-phosphate + CoA + H(+). It catalyses the reaction N-acetyl-alpha-D-glucosamine 1-phosphate + UTP + H(+) = UDP-N-acetyl-alpha-D-glucosamine + diphosphate. It participates in nucleotide-sugar biosynthesis; UDP-N-acetyl-alpha-D-glucosamine biosynthesis; N-acetyl-alpha-D-glucosamine 1-phosphate from alpha-D-glucosamine 6-phosphate (route II): step 2/2. It functions in the pathway nucleotide-sugar biosynthesis; UDP-N-acetyl-alpha-D-glucosamine biosynthesis; UDP-N-acetyl-alpha-D-glucosamine from N-acetyl-alpha-D-glucosamine 1-phosphate: step 1/1. Its pathway is bacterial outer membrane biogenesis; LPS lipid A biosynthesis. Its function is as follows. Catalyzes the last two sequential reactions in the de novo biosynthetic pathway for UDP-N-acetylglucosamine (UDP-GlcNAc). The C-terminal domain catalyzes the transfer of acetyl group from acetyl coenzyme A to glucosamine-1-phosphate (GlcN-1-P) to produce N-acetylglucosamine-1-phosphate (GlcNAc-1-P), which is converted into UDP-GlcNAc by the transfer of uridine 5-monophosphate (from uridine 5-triphosphate), a reaction catalyzed by the N-terminal domain. In Clostridium acetobutylicum (strain ATCC 824 / DSM 792 / JCM 1419 / IAM 19013 / LMG 5710 / NBRC 13948 / NRRL B-527 / VKM B-1787 / 2291 / W), this protein is Bifunctional protein GlmU.